A 341-amino-acid chain; its full sequence is Peroxisomal membrane protein import receptor PEX19 (341 aa).

The segment covering 1-18 (MNENEYDNFDDLDDLLDE) has biased composition (acidic residues). Disordered regions lie at residues 1–26 (MNEN…LDEQ), 39–66 (DSEN…EDPE), 109–141 (VPRQ…FKNI), 293–312 (LGDS…NEEE), and 318–341 (LEID…CKQQ). A compositionally biased stretch (basic and acidic residues) spans 39 to 53 (DSENKEKNAESKDSD). S61 carries the post-translational modification Phosphoserine. Positions 113–141 (QMEQGSSSLKSNSTDKGTLNGSNPGFKNI) are enriched in polar residues. S303 is subject to Phosphoserine. A compositionally biased stretch (basic and acidic residues) spans 330 to 341 (LDKELTDGCKQQ). C338 is subject to Cysteine methyl ester. The S-farnesyl cysteine moiety is linked to residue C338. Positions 339–341 (KQQ) are cleaved as a propeptide — removed in mature form.

Belongs to the peroxin-19 family. As to quaternary structure, interacts (farnesylated) with PEX3; farnesylation is required for this interaction. Interacts with PEX2, PEX5, PEX10, PEX11, PEX12, PEX13, PEX14, PEX17, PEX22, PEX25, PEX30 and PEX32; the interaction requires well-defined PEX19-binding sites within the peroxisomal membrane protein targeting signal (mPTS) of the PMPs and is independent on the presence of PEX3. Interacts with VPS1.

The protein localises to the cytoplasm. The protein resides in the peroxisome membrane. It localises to the endoplasmic reticulum membrane. In terms of biological role, required for proper post-translational import and stabilization of peroxisomal membrane proteins (PMPs). Acts as a cytosolic import receptor for PMPs and delivers them to the docking factor PEX3 at the peroxisomal membrane for subsequent insertion into the membrane. Acts as a chaperone in stabilizing or maintaining PMPs in the lipid bilayer. Directs PEX17, a peripheral component of the peroxisomal matrix protein translocation machinery, to peroxisomes. Stabilizes VPS1, a protein required for peroxisomal fission, at the peroxisomal membrane. Also acts in conjunction with PEX3 in the formation of peroxisomes from preperoxisomal compartments at the endoplasmic reticulum during de novo peroxisome synthesis, probably via the import of additional PMPs. The polypeptide is Peroxisomal membrane protein import receptor PEX19 (PEX19) (Saccharomyces cerevisiae (strain YJM789) (Baker's yeast)).